The following is a 500-amino-acid chain: Probable malate:quinone oxidoreductase (500 aa).

The protein belongs to the MQO family. Requires FAD as cofactor.

The enzyme catalyses (S)-malate + a quinone = a quinol + oxaloacetate. It participates in carbohydrate metabolism; tricarboxylic acid cycle; oxaloacetate from (S)-malate (quinone route): step 1/1. The protein is Probable malate:quinone oxidoreductase of Bacillus cereus (strain ATCC 10987 / NRS 248).